Here is a 442-residue protein sequence, read N- to C-terminus: 3-phosphoshikimate 1-carboxyvinyltransferase (442 aa).

3 residues coordinate 3-phosphoshikimate: K25, S26, and R30. Position 25 (K25) interacts with phosphoenolpyruvate. G97 and R125 together coordinate phosphoenolpyruvate. 3-phosphoshikimate contacts are provided by S170, S171, Q172, D323, and K350. Q172 lines the phosphoenolpyruvate pocket. D323 acts as the Proton acceptor in catalysis. The phosphoenolpyruvate site is built by R354 and R399.

The protein belongs to the EPSP synthase family. As to quaternary structure, monomer.

The protein localises to the cytoplasm. It catalyses the reaction 3-phosphoshikimate + phosphoenolpyruvate = 5-O-(1-carboxyvinyl)-3-phosphoshikimate + phosphate. It functions in the pathway metabolic intermediate biosynthesis; chorismate biosynthesis; chorismate from D-erythrose 4-phosphate and phosphoenolpyruvate: step 6/7. Its function is as follows. Catalyzes the transfer of the enolpyruvyl moiety of phosphoenolpyruvate (PEP) to the 5-hydroxyl of shikimate-3-phosphate (S3P) to produce enolpyruvyl shikimate-3-phosphate and inorganic phosphate. This chain is 3-phosphoshikimate 1-carboxyvinyltransferase, found in Bartonella tribocorum (strain CIP 105476 / IBS 506).